We begin with the raw amino-acid sequence, 195 residues long: Imidazoleglycerol-phosphate dehydratase (195 aa).

Belongs to the imidazoleglycerol-phosphate dehydratase family.

The protein localises to the cytoplasm. It carries out the reaction D-erythro-1-(imidazol-4-yl)glycerol 3-phosphate = 3-(imidazol-4-yl)-2-oxopropyl phosphate + H2O. It functions in the pathway amino-acid biosynthesis; L-histidine biosynthesis; L-histidine from 5-phospho-alpha-D-ribose 1-diphosphate: step 6/9. The protein is Imidazoleglycerol-phosphate dehydratase of Polynucleobacter asymbioticus (strain DSM 18221 / CIP 109841 / QLW-P1DMWA-1) (Polynucleobacter necessarius subsp. asymbioticus).